The chain runs to 343 residues: uncharacterized protein (343 aa).

This sequence belongs to the histone deacetylase family.

Functionally, putative deacetylase. This is an uncharacterized protein from Methanocaldococcus jannaschii (strain ATCC 43067 / DSM 2661 / JAL-1 / JCM 10045 / NBRC 100440) (Methanococcus jannaschii).